A 177-amino-acid chain; its full sequence is Large ribosomal subunit protein uL6 (177 aa).

The protein belongs to the universal ribosomal protein uL6 family. Part of the 50S ribosomal subunit.

This protein binds to the 23S rRNA, and is important in its secondary structure. It is located near the subunit interface in the base of the L7/L12 stalk, and near the tRNA binding site of the peptidyltransferase center. The polypeptide is Large ribosomal subunit protein uL6 (Methanococcoides burtonii (strain DSM 6242 / NBRC 107633 / OCM 468 / ACE-M)).